We begin with the raw amino-acid sequence, 566 residues long: MAPALAVTRDLTAVGSPENAPAKGRASVYSEVQSSRINNTLPLPSVLKGAFKIVEGPASSAAGNPDEIAKLFPGLYGQPSVAVVPDQDAPSSAPKLKIGVVLSGGQAPGGHNVISGLFDYLQERAKGSTFYGFKGGPAGIMKCKYVELNAEYIQPYRNQGGFDMICSGRDKIETPDQFKQAEETAKKLDLDGLVVIGGDDSNTNACLLAENFRSKNLKTRVIGCPKTIDGDLKCKEVPTSFGFDTACKIYSEMIGNVMIDARSTGKYYHFVRLMGRAASHITLECALQTHPNITIIGEEVSAQKQTLKNVTDYMVDVICKRAELGYNYGVILIPEGLIDFIPEVQELIAELNEILANEVVDENGLWKKKLTEQSLKLFDLLPEAIQEQLMLERDPHGNVQVAKIETEKMLIQMVETELEKRKQAGAYKGQFMGQSHFFGYEGRCGLPTNFDATYCYALGYGAGVLLNSGKTGLISSVGNLAAPVEEWTVGGTALTALMDVERRHGKFKPVIKKAMVELEGAPFKKFASLREEWALKNRYISPGPIQFTGPGSDSLSHTLLLELGAQ.

Serine 16 is subject to Phosphoserine. Glycine 105 contributes to the diphosphate binding site. Mg(2+) is bound at residue aspartate 199. Residues threonine 227–aspartate 229, lysine 266–tyrosine 267, methionine 274–arginine 276, glutamate 335, and tyrosine 440–arginine 443 each bind substrate. The active-site Proton acceptor is the aspartate 229.

This sequence belongs to the phosphofructokinase type A (PFKA) family. PPi-dependent PFK group II subfamily. Clade 'Long' sub-subfamily. Tetramer of two alpha (regulatory) and two beta (catalytic) chains. The cofactor is Mg(2+).

It localises to the cytoplasm. The enzyme catalyses beta-D-fructose 6-phosphate + diphosphate = beta-D-fructose 1,6-bisphosphate + phosphate + H(+). Its pathway is carbohydrate degradation; glycolysis; D-glyceraldehyde 3-phosphate and glycerone phosphate from D-glucose: step 3/4. Its activity is regulated as follows. Allosterically activated by fructose 2,6-bisphosphate. Its function is as follows. Catalytic subunit of pyrophosphate--fructose 6-phosphate 1-phosphotransferase. Catalyzes the phosphorylation of D-fructose 6-phosphate, the first committing step of glycolysis. Uses inorganic phosphate (PPi) as phosphoryl donor instead of ATP like common ATP-dependent phosphofructokinases (ATP-PFKs), which renders the reaction reversible, and can thus function both in glycolysis and gluconeogenesis. In Arabidopsis thaliana (Mouse-ear cress), this protein is Pyrophosphate--fructose 6-phosphate 1-phosphotransferase subunit beta 1.